The primary structure comprises 243 residues: Segregation and condensation protein A (243 aa).

It belongs to the ScpA family. Component of a cohesin-like complex composed of ScpA, ScpB and the Smc homodimer, in which ScpA and ScpB bind to the head domain of Smc. The presence of the three proteins is required for the association of the complex with DNA.

It localises to the cytoplasm. In terms of biological role, participates in chromosomal partition during cell division. May act via the formation of a condensin-like complex containing Smc and ScpB that pull DNA away from mid-cell into both cell halves. In Halothermothrix orenii (strain H 168 / OCM 544 / DSM 9562), this protein is Segregation and condensation protein A.